A 1405-amino-acid chain; its full sequence is DNA-directed RNA polymerase subunit beta' (1405 aa).

4 residues coordinate Zn(2+): C70, C72, C85, and C88. The Mg(2+) site is built by D460, D462, and D464. C814, C888, C895, and C898 together coordinate Zn(2+).

This sequence belongs to the RNA polymerase beta' chain family. The RNAP catalytic core consists of 2 alpha, 1 beta, 1 beta' and 1 omega subunit. When a sigma factor is associated with the core the holoenzyme is formed, which can initiate transcription. It depends on Mg(2+) as a cofactor. Requires Zn(2+) as cofactor.

The catalysed reaction is RNA(n) + a ribonucleoside 5'-triphosphate = RNA(n+1) + diphosphate. Functionally, DNA-dependent RNA polymerase catalyzes the transcription of DNA into RNA using the four ribonucleoside triphosphates as substrates. The sequence is that of DNA-directed RNA polymerase subunit beta' from Shewanella sp. (strain MR-7).